The following is a 178-amino-acid chain: Mediator of RNA polymerase II transcription subunit 21 (178 aa).

Positions 36–91 are disordered; sequence DDDDVNSYSNMAANAPLPQSQQQRQQQKKQQEPQQEIEQPQQQSNPESKSISPPKE. A compositionally biased stretch (low complexity) spans 67–85; sequence EPQQEIEQPQQQSNPESKS. Positions 128–169 form a coiled coil; sequence NEQMNLINELSDKLQAIEEERIQKIKEKDNLLNLLESMIKEV.

This sequence belongs to the Mediator complex subunit 21 family. In terms of assembly, component of the Mediator complex.

It localises to the nucleus. Component of the Mediator complex, a coactivator involved in the regulated transcription of nearly all RNA polymerase II-dependent genes. Mediator functions as a bridge to convey information from gene-specific regulatory proteins to the basal RNA polymerase II transcription machinery. Mediator is recruited to promoters by direct interactions with regulatory proteins and serves as a scaffold for the assembly of a functional preinitiation complex with RNA polymerase II and the general transcription factors. The protein is Mediator of RNA polymerase II transcription subunit 21 (SRB7) of Candida albicans (strain SC5314 / ATCC MYA-2876) (Yeast).